The chain runs to 184 residues: MSWRSESIWIEFRTGSRKTSNFFWAFILFLGSLGFLLVGTSSYLGRNVISLFPSQQIIFFPQGIVMSFYGIAGLFISCYLWCTILWNVGSGYDLFDRKEGIVRIFRWGFPGKSRRIFLRFLMKDIQSIRIEVKEGISARRVLYMEIRGQGAIPLIRTDENFTTREIEQKAAELAYFLRVPIEVF.

2 helical membrane passes run 22–42 and 57–77; these read FFWA…GTSS and IIFF…LFIS.

This sequence belongs to the Ycf4 family.

The protein localises to the plastid. It is found in the chloroplast thylakoid membrane. Its function is as follows. Seems to be required for the assembly of the photosystem I complex. This chain is Photosystem I assembly protein Ycf4, found in Aethionema grandiflorum (Persian stone-cress).